Consider the following 253-residue polypeptide: DNA polymerase sliding clamp 2 (253 aa).

This sequence belongs to the PCNA family. Homotrimer. The subunits circularize to form a toroid; DNA passes through its center. Replication factor C (RFC) is required to load the toroid on the DNA. Interacts with TIP.

With respect to regulation, inhibited by interaction with the PCNA inhibitor TIP. Functionally, sliding clamp subunit that acts as a moving platform for DNA processing. Responsible for tethering the catalytic subunit of DNA polymerase and other proteins to DNA during high-speed replication. This is DNA polymerase sliding clamp 2 from Thermococcus kodakarensis (strain ATCC BAA-918 / JCM 12380 / KOD1) (Pyrococcus kodakaraensis (strain KOD1)).